The chain runs to 311 residues: Glycine--tRNA ligase alpha subunit (311 aa).

Belongs to the class-II aminoacyl-tRNA synthetase family. As to quaternary structure, tetramer of two alpha and two beta subunits.

It is found in the cytoplasm. The enzyme catalyses tRNA(Gly) + glycine + ATP = glycyl-tRNA(Gly) + AMP + diphosphate. The sequence is that of Glycine--tRNA ligase alpha subunit from Bradyrhizobium diazoefficiens (strain JCM 10833 / BCRC 13528 / IAM 13628 / NBRC 14792 / USDA 110).